Consider the following 221-residue polypeptide: MKKAVVLLSGGMDSAAVIAMAQEQGFAVHALSVRYGQRHTSELDAAARVAKAQGVVAHKIVDVDLRSIGGSALTDDIDVPEAGGAGIPVTYVPARNTIMLSLALGWAEVLGANDIFCGVNAVDYSGYPDCRPEFVAAFQALANLATKSGVEGAGIKVHAPLQFLSKGQIVSEGVRLGVDFGLTVSCYNADANGAACGHCDACRLRAQGFAEAGVPDPTLYA.

8–18 (LSGGMDSAAVI) lines the ATP pocket. The Zn(2+) site is built by Cys186, Cys196, Cys199, and Cys202.

The protein belongs to the QueC family. It depends on Zn(2+) as a cofactor.

It catalyses the reaction 7-carboxy-7-deazaguanine + NH4(+) + ATP = 7-cyano-7-deazaguanine + ADP + phosphate + H2O + H(+). It participates in purine metabolism; 7-cyano-7-deazaguanine biosynthesis. In terms of biological role, catalyzes the ATP-dependent conversion of 7-carboxy-7-deazaguanine (CDG) to 7-cyano-7-deazaguanine (preQ(0)). This chain is 7-cyano-7-deazaguanine synthase, found in Stenotrophomonas maltophilia (strain K279a).